The primary structure comprises 212 residues: Large ribosomal subunit protein uL3 (212 aa).

Residues 135 to 156 (MTHGNSRSHRVPGSIGQNQSPG) form a disordered region. N5-methylglutamine is present on Gln-153.

It belongs to the universal ribosomal protein uL3 family. As to quaternary structure, part of the 50S ribosomal subunit. Forms a cluster with proteins L14 and L19. In terms of processing, methylated by PrmB.

One of the primary rRNA binding proteins, it binds directly near the 3'-end of the 23S rRNA, where it nucleates assembly of the 50S subunit. This Tolumonas auensis (strain DSM 9187 / NBRC 110442 / TA 4) protein is Large ribosomal subunit protein uL3.